The primary structure comprises 342 residues: L-threonine 3-dehydrogenase (342 aa).

Cys-39 is a binding site for Zn(2+). Residues Thr-41 and His-44 each act as charge relay system in the active site. Residues His-64, Glu-65, Cys-94, Cys-97, Cys-100, and Cys-108 each coordinate Zn(2+). NAD(+)-binding positions include Ile-176, Asp-196, Arg-201, 263–265 (LGI), and 287–288 (IY).

It belongs to the zinc-containing alcohol dehydrogenase family. In terms of assembly, homotetramer. Zn(2+) is required as a cofactor.

The protein resides in the cytoplasm. It carries out the reaction L-threonine + NAD(+) = (2S)-2-amino-3-oxobutanoate + NADH + H(+). Its pathway is amino-acid degradation; L-threonine degradation via oxydo-reductase pathway; glycine from L-threonine: step 1/2. Functionally, catalyzes the NAD(+)-dependent oxidation of L-threonine to 2-amino-3-ketobutyrate. The polypeptide is L-threonine 3-dehydrogenase (Protochlamydia amoebophila (strain UWE25)).